The chain runs to 90 residues: MSFVPVNPRPFLQDLVNSFVTIRLKWGETEYVGRLVSIDSYMNIQLSDTKEYINRKFTGALGQVLIRCNNVLYIKKADEAETSGDVKMEE.

Positions 7-80 (NPRPFLQDLV…VLYIKKADEA (74 aa)) constitute a Sm domain.

This sequence belongs to the snRNP Sm proteins family. SmF/LSm6 subfamily.

It is found in the nucleus. It localises to the cytoplasm. Plays a role in pre-mRNA splicing as a core component of the spliceosomal U1, U2, U4 and U5 small nuclear ribonucleoproteins (snRNPs), the building blocks of the spliceosome. This is Probable small nuclear ribonucleoprotein F from Neurospora crassa (strain ATCC 24698 / 74-OR23-1A / CBS 708.71 / DSM 1257 / FGSC 987).